Consider the following 45-residue polypeptide: Photosystem II reaction center protein K (45 aa).

The propeptide occupies 1-8; the sequence is MITAIIIA. A helical membrane pass occupies residues 23-43; sequence ILPVIPIFFLLLAFVWQAAIG.

Belongs to the PsbK family. In terms of assembly, PSII is composed of 1 copy each of membrane proteins PsbA, PsbB, PsbC, PsbD, PsbE, PsbF, PsbH, PsbI, PsbJ, PsbK, PsbL, PsbM, PsbT, PsbX, PsbY, PsbZ, Psb30/Ycf12, at least 3 peripheral proteins of the oxygen-evolving complex and a large number of cofactors. It forms dimeric complexes.

It localises to the plastid. The protein localises to the chloroplast thylakoid membrane. In terms of biological role, one of the components of the core complex of photosystem II (PSII). PSII is a light-driven water:plastoquinone oxidoreductase that uses light energy to abstract electrons from H(2)O, generating O(2) and a proton gradient subsequently used for ATP formation. It consists of a core antenna complex that captures photons, and an electron transfer chain that converts photonic excitation into a charge separation. This Gracilaria tenuistipitata var. liui (Red alga) protein is Photosystem II reaction center protein K.